We begin with the raw amino-acid sequence, 437 residues long: UDP-N-acetylmuramoylalanine--D-glutamate ligase (437 aa).

112–118 (GSNGKST) lines the ATP pocket.

It belongs to the MurCDEF family.

Its subcellular location is the cytoplasm. The catalysed reaction is UDP-N-acetyl-alpha-D-muramoyl-L-alanine + D-glutamate + ATP = UDP-N-acetyl-alpha-D-muramoyl-L-alanyl-D-glutamate + ADP + phosphate + H(+). It functions in the pathway cell wall biogenesis; peptidoglycan biosynthesis. Functionally, cell wall formation. Catalyzes the addition of glutamate to the nucleotide precursor UDP-N-acetylmuramoyl-L-alanine (UMA). This is UDP-N-acetylmuramoylalanine--D-glutamate ligase from Haemophilus influenzae (strain 86-028NP).